The chain runs to 378 residues: Chaperone protein DnaJ (378 aa).

The J domain occupies 5–70; sequence DYYEVLSVGR…DKKAAYDQFG (66 aa). A CR-type zinc finger spans residues 133-211; the sequence is GLTKELRIPT…CHGEGRVEKS (79 aa). The Zn(2+) site is built by cysteine 146, cysteine 149, cysteine 163, cysteine 166, cysteine 185, cysteine 188, cysteine 199, and cysteine 202. CXXCXGXG motif repeat units lie at residues 146–153, 163–170, 185–192, and 199–206; these read CDTCDGSG, CGTCHGQG, CPTCHGRG, and CNSCHGEG.

It belongs to the DnaJ family. Homodimer. It depends on Zn(2+) as a cofactor.

The protein localises to the cytoplasm. In terms of biological role, participates actively in the response to hyperosmotic and heat shock by preventing the aggregation of stress-denatured proteins and by disaggregating proteins, also in an autonomous, DnaK-independent fashion. Unfolded proteins bind initially to DnaJ; upon interaction with the DnaJ-bound protein, DnaK hydrolyzes its bound ATP, resulting in the formation of a stable complex. GrpE releases ADP from DnaK; ATP binding to DnaK triggers the release of the substrate protein, thus completing the reaction cycle. Several rounds of ATP-dependent interactions between DnaJ, DnaK and GrpE are required for fully efficient folding. Also involved, together with DnaK and GrpE, in the DNA replication of plasmids through activation of initiation proteins. The polypeptide is Chaperone protein DnaJ (Shewanella woodyi (strain ATCC 51908 / MS32)).